The sequence spans 124 residues: Small ribosomal subunit protein uS12 (124 aa).

A disordered region spans residues 1–25; that stretch reads MATINQLVRKPRQASTYKSASPALD.

This sequence belongs to the universal ribosomal protein uS12 family. In terms of assembly, part of the 30S ribosomal subunit. Contacts proteins S8 and S17. May interact with IF1 in the 30S initiation complex.

Its function is as follows. With S4 and S5 plays an important role in translational accuracy. Functionally, interacts with and stabilizes bases of the 16S rRNA that are involved in tRNA selection in the A site and with the mRNA backbone. Located at the interface of the 30S and 50S subunits, it traverses the body of the 30S subunit contacting proteins on the other side and probably holding the rRNA structure together. The combined cluster of proteins S8, S12 and S17 appears to hold together the shoulder and platform of the 30S subunit. The polypeptide is Small ribosomal subunit protein uS12 (Xylella fastidiosa (strain 9a5c)).